The primary structure comprises 181 residues: UPF0316 protein Bcer98_2136 (181 aa).

3 helical membrane passes run Leu6–Val26, Ser32–Phe52, and Trp58–Ile78.

It belongs to the UPF0316 family.

Its subcellular location is the cell membrane. The chain is UPF0316 protein Bcer98_2136 from Bacillus cytotoxicus (strain DSM 22905 / CIP 110041 / 391-98 / NVH 391-98).